The following is a 226-amino-acid chain: tRNA (guanine-N(7)-)-methyltransferase (226 aa).

E59, E84, D111, and D134 together coordinate S-adenosyl-L-methionine. D134 is an active-site residue. Residue K138 participates in substrate binding. The interaction with RNA stretch occupies residues 140–145 (RHNKRR). Residues D170 and 205–208 (TKFE) each bind substrate.

It belongs to the class I-like SAM-binding methyltransferase superfamily. TrmB family.

It catalyses the reaction guanosine(46) in tRNA + S-adenosyl-L-methionine = N(7)-methylguanosine(46) in tRNA + S-adenosyl-L-homocysteine. It functions in the pathway tRNA modification; N(7)-methylguanine-tRNA biosynthesis. Its function is as follows. Catalyzes the formation of N(7)-methylguanine at position 46 (m7G46) in tRNA. The polypeptide is tRNA (guanine-N(7)-)-methyltransferase (Chromobacterium violaceum (strain ATCC 12472 / DSM 30191 / JCM 1249 / CCUG 213 / NBRC 12614 / NCIMB 9131 / NCTC 9757 / MK)).